A 335-amino-acid polypeptide reads, in one-letter code: Probable magnesium transporter NIPA1 (335 aa).

Residues 1–7 (MDQMSPD) lie on the Extracellular side of the membrane. Residues 8–28 (NINGVILAVSSSIFIGSSFII) form a helical membrane-spanning segment. Over 29-55 (KKKGLKKAGASGVRAGEGGYGYLKEPW) the chain is Cytoplasmic. The helical transmembrane segment at 56-76 (WWAGMITMIVGEVANFAAYAF) threads the bilayer. Residues 77 to 79 (APA) lie on the Extracellular side of the membrane. Residues 80 to 100 (ILVTPLGALSIIFSAVLAHFI) traverse the membrane as a helical segment. Residues 101-104 (LKEK) are Cytoplasmic-facing. A helical membrane pass occupies residues 105 to 125 (LHMFGILGCILCVVGSTTIVL). Topologically, residues 126-143 (HAPHEQKIESVKQIWQLA) are extracellular. Residues 144–164 (IEPGFLVYSAVIVIVVAILIF) traverse the membrane as a helical segment. The Cytoplasmic segment spans residues 165–179 (YYEPRYGKTHMIVYV). A helical membrane pass occupies residues 180–200 (GICSLMGSLTVMSVKAVAIAI). At 201-212 (KLTFSGTNQFKY) the chain is on the extracellular side. The chain crosses the membrane as a helical span at residues 213-233 (FNTWIFILVVATCCILQINYL). The Cytoplasmic portion of the chain corresponds to 234–244 (NKALDTFNTAV). Residues 245 to 265 (ISPVYYVMFTTFTIIASMIMF) form a helical membrane-spanning segment. Residues 266–272 (KDWASQS) lie on the Extracellular side of the membrane. Residues 273–293 (GLKIATELCGFVTILSGTFLL) form a helical membrane-spanning segment. Topologically, residues 294-335 (HKTKDMGNSASGRGSISMPTRDTPVFTNSGSGRSSSSDKVAS) are cytoplasmic. Residues 303–321 (ASGRGSISMPTRDTPVFTN) show a composition bias toward polar residues. The disordered stretch occupies residues 303–335 (ASGRGSISMPTRDTPVFTNSGSGRSSSSDKVAS). Low complexity predominate over residues 322 to 335 (SGSGRSSSSDKVAS).

Belongs to the NIPA (TC 2.A.7) family. Homodimer.

It localises to the cell membrane. The protein resides in the early endosome. Acts as a Mg(2+) transporter. Can also transport other divalent cations such as Fe(2+), Sr(2+), Ba(2+), Mn(2+) and Co(2+) but to a much less extent than Mg(2+). The protein is Probable magnesium transporter NIPA1 of Arabidopsis thaliana (Mouse-ear cress).